The sequence spans 282 residues: D-alanine aminotransferase (282 aa).

Tyr-32 serves as a coordination point for substrate. Arg-51 lines the pyridoxal 5'-phosphate pocket. 2 residues coordinate substrate: Arg-99 and His-101. Lys-146 functions as the Proton acceptor in the catalytic mechanism. Position 146 is an N6-(pyridoxal phosphate)lysine (Lys-146). Pyridoxal 5'-phosphate is bound at residue Glu-178.

This sequence belongs to the class-IV pyridoxal-phosphate-dependent aminotransferase family. As to quaternary structure, homodimer. Pyridoxal 5'-phosphate is required as a cofactor.

It carries out the reaction D-alanine + 2-oxoglutarate = D-glutamate + pyruvate. In terms of biological role, acts on the D-isomers of alanine, leucine, aspartate, glutamate, aminobutyrate, norvaline and asparagine. The enzyme transfers an amino group from a substrate D-amino acid to the pyridoxal phosphate cofactor to form pyridoxamine and an alpha-keto acid in the first half-reaction. The second half-reaction is the reverse of the first, transferring the amino group from the pyridoxamine to a second alpha-keto acid to form the product D-amino acid via a ping-pong mechanism. This is an important process in the formation of D-alanine and D-glutamate, which are essential bacterial cell wall components. In Staphylococcus epidermidis (strain ATCC 35984 / DSM 28319 / BCRC 17069 / CCUG 31568 / BM 3577 / RP62A), this protein is D-alanine aminotransferase (dat).